The following is a 121-amino-acid chain: Large ribosomal subunit protein uL18 (121 aa).

It belongs to the universal ribosomal protein uL18 family. Part of the 50S ribosomal subunit; part of the 5S rRNA/L5/L18/L25 subcomplex. Contacts the 5S and 23S rRNAs.

Its function is as follows. This is one of the proteins that bind and probably mediate the attachment of the 5S RNA into the large ribosomal subunit, where it forms part of the central protuberance. The polypeptide is Large ribosomal subunit protein uL18 (Bdellovibrio bacteriovorus (strain ATCC 15356 / DSM 50701 / NCIMB 9529 / HD100)).